A 556-amino-acid polypeptide reads, in one-letter code: Arginine--tRNA ligase 1 (556 aa).

A 'HIGH' region motif is present at residues 132 to 142; the sequence is ANPTGDLHLGH.

The protein belongs to the class-I aminoacyl-tRNA synthetase family. As to quaternary structure, monomer.

It is found in the cytoplasm. The enzyme catalyses tRNA(Arg) + L-arginine + ATP = L-arginyl-tRNA(Arg) + AMP + diphosphate. The protein is Arginine--tRNA ligase 1 of Bacillus anthracis.